Here is a 380-residue protein sequence, read N- to C-terminus: Chaperone protein DnaJ (380 aa).

A J domain is found at 5–70 (DFYETLGVSK…QKRAAYDRFG (66 aa)). The CR-type zinc-finger motif lies at 141–219 (GKTAQIRVPT…CHGQGRVTEE (79 aa)). Zn(2+)-binding residues include C154, C157, C171, C174, C193, C196, C207, and C210. CXXCXGXG motif repeat units lie at residues 154-161 (CEVCSGSG), 171-178 (CATCQGSG), 193-200 (CPTCQGRG), and 207-214 (CGKCHGQG).

The protein belongs to the DnaJ family. Homodimer. Zn(2+) is required as a cofactor.

The protein localises to the cytoplasm. Its function is as follows. Participates actively in the response to hyperosmotic and heat shock by preventing the aggregation of stress-denatured proteins and by disaggregating proteins, also in an autonomous, DnaK-independent fashion. Unfolded proteins bind initially to DnaJ; upon interaction with the DnaJ-bound protein, DnaK hydrolyzes its bound ATP, resulting in the formation of a stable complex. GrpE releases ADP from DnaK; ATP binding to DnaK triggers the release of the substrate protein, thus completing the reaction cycle. Several rounds of ATP-dependent interactions between DnaJ, DnaK and GrpE are required for fully efficient folding. Also involved, together with DnaK and GrpE, in the DNA replication of plasmids through activation of initiation proteins. This is Chaperone protein DnaJ from Allorhizobium ampelinum (strain ATCC BAA-846 / DSM 112012 / S4) (Agrobacterium vitis (strain S4)).